Reading from the N-terminus, the 111-residue chain is Aspartate 1-decarboxylase (111 aa).

The active-site Schiff-base intermediate with substrate; via pyruvic acid is the Ser25. Residue Ser25 is modified to Pyruvic acid (Ser). Residue Thr57 coordinates substrate. Residue Tyr58 is the Proton donor of the active site. Position 73–75 (73–75 (GPA)) interacts with substrate.

The protein belongs to the PanD family. Heterooctamer of four alpha and four beta subunits. Pyruvate serves as cofactor. In terms of processing, is synthesized initially as an inactive proenzyme, which is activated by self-cleavage at a specific serine bond to produce a beta-subunit with a hydroxyl group at its C-terminus and an alpha-subunit with a pyruvoyl group at its N-terminus.

It is found in the cytoplasm. It catalyses the reaction L-aspartate + H(+) = beta-alanine + CO2. The protein operates within cofactor biosynthesis; (R)-pantothenate biosynthesis; beta-alanine from L-aspartate: step 1/1. Functionally, catalyzes the pyruvoyl-dependent decarboxylation of aspartate to produce beta-alanine. This Francisella tularensis subsp. holarctica (strain LVS) protein is Aspartate 1-decarboxylase.